The primary structure comprises 236 residues: Predicted GPI-anchored protein 43 (236 aa).

Residues 1-24 (MHQRNHHSILLTLLLYLQSIVALA) form the signal peptide. N-linked (GlcNAc...) asparagine glycans are attached at residues Asn192, Asn195, and Asn198. Residue Gly208 is the site of GPI-anchor amidated glycine attachment. The propeptide at 209 to 236 (SVCLTSSYLNSPIIILCAILTGTLFAMY) is removed in mature form.

The protein resides in the cell membrane. This chain is Predicted GPI-anchored protein 43 (PGA43), found in Candida albicans (strain SC5314 / ATCC MYA-2876) (Yeast).